Consider the following 688-residue polypeptide: Polyribonucleotide nucleotidyltransferase (688 aa).

Residues Asp484 and Asp490 each contribute to the Mg(2+) site. Residues 550–609 enclose the KH domain; sequence PTTEIFNVAPDKIVEIIGQGGRVIKEIVEKFEVKIDLNKPSGEVKIMGNKERVLKTKEFI. The 63-residue stretch at 626–688 folds into the S1 motif domain; it reads DEVLEAQVKR…NKGKIALDLA (63 aa).

This sequence belongs to the polyribonucleotide nucleotidyltransferase family. Requires Mg(2+) as cofactor.

It is found in the cytoplasm. It catalyses the reaction RNA(n+1) + phosphate = RNA(n) + a ribonucleoside 5'-diphosphate. Functionally, involved in mRNA degradation. Catalyzes the phosphorolysis of single-stranded polyribonucleotides processively in the 3'- to 5'-direction. In Helicobacter pylori (strain G27), this protein is Polyribonucleotide nucleotidyltransferase.